We begin with the raw amino-acid sequence, 285 residues long: Flagellar filament core protein flaB2 (285 aa).

The protein belongs to the bacterial flagellin family. As to quaternary structure, the flagellum consists of an outer layer composed of two sheath proteins, flaA1 (44 kDa) and flaA2 (35 kDa) around a core that contains three proteins flaB1 (37 kDa), flaB2 (34 kDa) and flaB3 (32 kDa).

It is found in the periplasmic flagellum. The protein resides in the periplasm. Functionally, component of the core of the flagella. This chain is Flagellar filament core protein flaB2 (flaB2), found in Brachyspira hyodysenteriae (Treponema hyodysenteriae).